We begin with the raw amino-acid sequence, 555 residues long: Probable Xaa-Pro aminopeptidase BC1G_13431 (555 aa).

Mn(2+) contacts are provided by D303, D314, E458, and E499. Residues 527 to 555 form a disordered region; it reads EGKEQEEEEEREANRKATESRKQKKTWFW. Over residues 538–547 the composition is skewed to basic and acidic residues; it reads EANRKATESR.

It belongs to the peptidase M24B family. Requires Mn(2+) as cofactor.

It carries out the reaction Release of any N-terminal amino acid, including proline, that is linked to proline, even from a dipeptide or tripeptide.. In terms of biological role, catalyzes the removal of a penultimate prolyl residue from the N-termini of peptides. This chain is Probable Xaa-Pro aminopeptidase BC1G_13431, found in Botryotinia fuckeliana (strain B05.10) (Noble rot fungus).